Reading from the N-terminus, the 3390-residue chain is Polyprotein-FSD (3390 aa).

In terms of domain architecture, SF3 helicase spans 369–543; the sequence is TVKRRNEILT…ELGPFNYKNP (175 aa). 396-403 provides a ligand contact to ATP; it reads GPGGIGKT. A Peptidase C3 domain is found at 1206-1423; the sequence is KPYFQIAEEK…MSALIYKEDL (218 aa). Active-site for 3C-like protease activity residues include His1258, Glu1295, and Cys1381. The region spanning 1914–2042 is the RdRp catalytic domain; sequence KNFFSCDYKN…AVDDSIADIF (129 aa). At Met2346 the chain carries N-acetylmethionine; by host. Disordered regions lie at residues 2576 to 2609 and 3168 to 3190; these read YNDLNLSGGTDPDPDPEPDPDPEPGPDPEPGVDE and TPSEAYDNSKGFVPQPGTSKSIA. Over residues 2587-2609 the composition is skewed to acidic residues; it reads PDPDPEPDPDPEPGPDPEPGVDE.

N-acetylated. In terms of processing, proteolytic cleavages of the polyprotein yield mature proteins.

It is found in the virion. It carries out the reaction RNA(n) + a ribonucleoside 5'-triphosphate = RNA(n+1) + diphosphate. It catalyses the reaction ATP + H2O = ADP + phosphate + H(+). Functionally, assembles with VP1 and VP2 to form an icosahedral capsid. VP1 is about 5 time more abundant than VP1-FSD in the virion. Assembles with VP1 and VP1-FSD to form an icosahedral capsid. Its function is as follows. Replicates genomic and antigenomic RNA. This chain is Polyprotein-FSD, found in Solenopsis invicta (Red imported fire ant).